Reading from the N-terminus, the 206-residue chain is Ion-translocating oxidoreductase complex subunit G (206 aa).

The helical transmembrane segment at 9–29 threads the bilayer; it reads GITLALFAAGSTGLTAAINQM. T174 carries the post-translational modification FMN phosphoryl threonine.

Belongs to the RnfG family. As to quaternary structure, the complex is composed of six subunits: RsxA, RsxB, RsxC, RsxD, RsxE and RsxG. FMN is required as a cofactor.

It localises to the cell inner membrane. Functionally, part of a membrane-bound complex that couples electron transfer with translocation of ions across the membrane. Required to maintain the reduced state of SoxR. Probably transfers electron from NAD(P)H to SoxR. This is Ion-translocating oxidoreductase complex subunit G from Escherichia coli (strain K12).